The primary structure comprises 85 residues: Large ribosomal subunit protein bL27 (85 aa).

The interval 1–20 is disordered; it reads MATKKAGGSTRNGRDSEAKR.

This sequence belongs to the bacterial ribosomal protein bL27 family.

This chain is Large ribosomal subunit protein bL27, found in Histophilus somni (strain 129Pt) (Haemophilus somnus).